The primary structure comprises 405 residues: Serpin H1 (405 aa).

Positions 1–15 (MQIFLVLALCGLAAA) are cleaved as a signal peptide. Asparagine 107 and asparagine 112 each carry an N-linked (GlcNAc...) asparagine glycan. The short motif at 402-405 (RDEL) is the Prevents secretion from ER element.

This sequence belongs to the serpin family.

The protein localises to the endoplasmic reticulum lumen. Binds specifically to collagen. Could be involved as a chaperone in the biosynthetic pathway of collagen. The sequence is that of Serpin H1 (SERPINH1) from Gallus gallus (Chicken).